The sequence spans 247 residues: 1-(5-phosphoribosyl)-5-[(5-phosphoribosylamino)methylideneamino] imidazole-4-carboxamide isomerase (247 aa).

Catalysis depends on D8, which acts as the Proton acceptor. D131 (proton donor) is an active-site residue.

The protein belongs to the HisA/HisF family.

Its subcellular location is the cytoplasm. The enzyme catalyses 1-(5-phospho-beta-D-ribosyl)-5-[(5-phospho-beta-D-ribosylamino)methylideneamino]imidazole-4-carboxamide = 5-[(5-phospho-1-deoxy-D-ribulos-1-ylimino)methylamino]-1-(5-phospho-beta-D-ribosyl)imidazole-4-carboxamide. Its pathway is amino-acid biosynthesis; L-histidine biosynthesis; L-histidine from 5-phospho-alpha-D-ribose 1-diphosphate: step 4/9. This is 1-(5-phosphoribosyl)-5-[(5-phosphoribosylamino)methylideneamino] imidazole-4-carboxamide isomerase from Ralstonia pickettii (strain 12J).